Here is a 418-residue protein sequence, read N- to C-terminus: UDP-N-acetylglucosamine 1-carboxyvinyltransferase (418 aa).

22–23 (KN) is a phosphoenolpyruvate binding site. Arginine 92 is a UDP-N-acetyl-alpha-D-glucosamine binding site. Cysteine 116 serves as the catalytic Proton donor. The residue at position 116 (cysteine 116) is a 2-(S-cysteinyl)pyruvic acid O-phosphothioketal. Residues aspartate 306 and isoleucine 328 each coordinate UDP-N-acetyl-alpha-D-glucosamine.

This sequence belongs to the EPSP synthase family. MurA subfamily.

It localises to the cytoplasm. The enzyme catalyses phosphoenolpyruvate + UDP-N-acetyl-alpha-D-glucosamine = UDP-N-acetyl-3-O-(1-carboxyvinyl)-alpha-D-glucosamine + phosphate. The protein operates within cell wall biogenesis; peptidoglycan biosynthesis. Its function is as follows. Cell wall formation. Adds enolpyruvyl to UDP-N-acetylglucosamine. The sequence is that of UDP-N-acetylglucosamine 1-carboxyvinyltransferase from Shewanella amazonensis (strain ATCC BAA-1098 / SB2B).